A 110-amino-acid chain; its full sequence is MSSSPLSSSLFHPLSTLSTHCHGRRQNLCFNRKQQPFVVRAAKLPEGVIVPKAQPKSQPAFLGFTQTAEIWNSRACMIGLIGTFIVELILNKGILELIGVEIGKGLDLPL.

Residues 1 to 41 constitute a chloroplast transit peptide; it reads MSSSPLSSSLFHPLSTLSTHCHGRRQNLCFNRKQQPFVVRA. The Stromal portion of the chain corresponds to 42-74; sequence AKLPEGVIVPKAQPKSQPAFLGFTQTAEIWNSR. The helical transmembrane segment at 75-95 threads the bilayer; the sequence is ACMIGLIGTFIVELILNKGIL. Residues 96 to 110 lie on the Lumenal side of the membrane; that stretch reads ELIGVEIGKGLDLPL.

This sequence belongs to the ELIP/psbS family. May bind chlorophyll and form dimers in the thylakoid membrane. Component of a high molecular weight complex containing OHP1, OHP2 and HCF244, and PSII core proteins D1/D2, HCF136 and HCF173. Interacts with HCF244. Forms a trimeric complex with OHP2 and HCF244 that mutually stabilizes each subunit. As to expression, mostly expressed in cotyledons and shoot apices.

The protein resides in the plastid. Its subcellular location is the chloroplast thylakoid membrane. May play a photoprotective role in the thylakoid membrane in response to light stress. Involved in photosystems I (PSI) and II (PSII) core proteins function. Forms a trimeric complex with OHP2 and HCF244 that is required to promote PSII core subunit assembly. The trimeric complex forms a transient PSII reaction center-like complex with PsbA, PsbD, PsbE, PsbF and PsbI subunits in thylakoids for early assembly of PSII as well as PSII repair. The trimeric complex is required for the recruitment of ribosomes to the psbA mRNA during PSII biogenesis and repair. Forms a heterodimer with OHP1 that binds chlorophylls and carotenoids, and that may function in the delivery of pigments to the PsbA subunit of PSII. The sequence is that of Light-harvesting complex-like protein OHP1, chloroplastic from Arabidopsis thaliana (Mouse-ear cress).